The sequence spans 198 residues: MDFYPVAIEKLIEEFAKLPGIGYKTAQRLTLHVLNLPSDEVREFANALVKARGTIKYCSICGNYTDSDPCAICSNPNRDESIICVIEQPKDIMSLEKIREYNGTYHVLHGVISPMSGKGPEDINLKGLIRRINENVKEVIVATNPNVEGEATAMYISKILKPLGVKVTRIAHGVPVGGDLEYADEVTLSKALEGRVEL.

The C4-type zinc finger occupies 58–73 (CSICGNYTDSDPCAIC). A Toprim domain is found at 81–175 (SIICVIEQPK…KVTRIAHGVP (95 aa)).

Belongs to the RecR family.

May play a role in DNA repair. It seems to be involved in an RecBC-independent recombinational process of DNA repair. It may act with RecF and RecO. This chain is Recombination protein RecR, found in Clostridium novyi (strain NT).